Consider the following 298-residue polypeptide: Transcription factor RAX2 (298 aa).

2 consecutive HTH myb-type domains span residues 9 to 62 (KANV…LNYL) and 63 to 117 (RPNI…KKKL). 2 DNA-binding regions (H-T-H motif) span residues 38-62 (WIAL…LNYL) and 90-113 (WSVI…NTKL).

Ubiquitous, with higher levels in roots, flowers, and shoot tips. Found in all cells of the shoot tips.

It is found in the nucleus. Transcription activator. Positively regulates axillary meristems (AMs) formation and development, especially during inflorescence. The polypeptide is Transcription factor RAX2 (RAX2) (Arabidopsis thaliana (Mouse-ear cress)).